The sequence spans 116 residues: uncharacterized protein (116 aa).

This is an uncharacterized protein from Saccharomyces cerevisiae (strain ATCC 204508 / S288c) (Baker's yeast).